Here is a 46-residue protein sequence, read N- to C-terminus: Large ribosomal subunit protein bL36 (46 aa).

The protein belongs to the bacterial ribosomal protein bL36 family.

This chain is Large ribosomal subunit protein bL36, found in Klebsiella pneumoniae (strain 342).